The chain runs to 433 residues: MVMMLFKKLSDVSEAEMQKLLSRGSGLEDVAKTVSTVLSDVRTKGDSALREYTAKFDKVELANFGVSEEEFQQALSGISPELLDHLKSAAANIRAFHEAQLPKATWFMELKPGIVLGQKATPLESVGAYAPGGRASYPSTVLMTVIPARVAGVEQVIVCTPPRPDGSVHPLTLAAAKVAGADKVFKLGGVQAIGSMAYGTETVPKVDKIVGPGNVFVTAAKMQIRDVAEIDFPAGPSEVLIIADESADAVMVASDILAQSEHDPNSVSILVTGSDTLAEAVKREVLVQAEQAARSSIIKSSLENAAILIADSLEQCIGFSNKFAPEHLEIMVADPDFVLDRIKNAGSIFIGNYSPVPVGDYASGTNHVLPTSGYARVYSGLNINHFIKYSSIQRISKSGLESLKETVIALAEEEGLQAHADAIRTRFGYKPSK.

NAD(+)-binding residues include Tyr129, Gln191, and Asn214. Positions 237, 259, and 262 each coordinate substrate. Residues Gln259 and His262 each contribute to the Zn(2+) site. Active-site proton acceptor residues include Glu326 and His327. Residues His327, Asp360, Glu414, and His419 each contribute to the substrate site. Asp360 is a Zn(2+) binding site. Residue His419 participates in Zn(2+) binding.

Belongs to the histidinol dehydrogenase family. Zn(2+) serves as cofactor.

The catalysed reaction is L-histidinol + 2 NAD(+) + H2O = L-histidine + 2 NADH + 3 H(+). It functions in the pathway amino-acid biosynthesis; L-histidine biosynthesis; L-histidine from 5-phospho-alpha-D-ribose 1-diphosphate: step 9/9. In terms of biological role, catalyzes the sequential NAD-dependent oxidations of L-histidinol to L-histidinaldehyde and then to L-histidine. The sequence is that of Histidinol dehydrogenase from Methanosarcina barkeri (strain Fusaro / DSM 804).